Reading from the N-terminus, the 264-residue chain is O-methyltransferase resE (264 aa).

S-adenosyl-L-methionine contacts are provided by glutamine 97 and histidine 142.

The protein belongs to the methyltransferase superfamily.

It carries out the reaction desmethylrestrictinol + S-adenosyl-L-methionine = restrictinol + S-adenosyl-L-homocysteine + H(+). Its pathway is antifungal biosynthesis. In terms of biological role, O-methyltransferase; part of the gene cluster that mediates the biosynthesis of the tetrahydropyranyl antifungal agent restricticin that acts as an inhibitor of CYP51 and blocks the ergosterol biosynthesis. Within the pathway, resE uses S-adenosylmethionine to methylate position C4 of desmethylrestrictinol to produce restrictinol. The highly reducing polyketide synthase resH, the short chain dehydrogenase resG, the cyclase resF, the FAD-dependent monooxygenase resA and the enoylreductase resD are required to generate the first stable intermediate desmethylrestrictinol. ResH with resD biosynthesize the first polyketide chain intermediate that is reduced by resG, followed by epoxidation by resA before 6-endo cyclization via epoxide opening by resF leads to desmethylrestrictinol. The methyltransferase resE then catalyzes the C4 O-methylation of desmethylrestrictinol to produce restrictinol, and the nonribosomal peptide synthetase resC catalyzes the C3 esterification of restrictinol with glycine that leads to restricticin. The sequence is that of O-methyltransferase resE from Aspergillus sclerotiorum.